The primary structure comprises 459 residues: Argininosuccinate lyase (459 aa).

Belongs to the lyase 1 family. Argininosuccinate lyase subfamily.

Its subcellular location is the cytoplasm. It catalyses the reaction 2-(N(omega)-L-arginino)succinate = fumarate + L-arginine. Its pathway is amino-acid biosynthesis; L-arginine biosynthesis; L-arginine from L-ornithine and carbamoyl phosphate: step 3/3. In Lactococcus lactis subsp. lactis (strain IL1403) (Streptococcus lactis), this protein is Argininosuccinate lyase.